A 384-amino-acid chain; its full sequence is Putative 8-amino-7-oxononanoate synthase (384 aa).

Arg-19 is a binding site for substrate. 106 to 107 (GY) is a binding site for pyridoxal 5'-phosphate. A substrate-binding site is contributed by His-131. Pyridoxal 5'-phosphate is bound by residues Ser-177, 202–205 (DDAH), and 233–236 (TLSK). Lys-236 carries the N6-(pyridoxal phosphate)lysine modification.

Belongs to the class-II pyridoxal-phosphate-dependent aminotransferase family. BioF subfamily. Homodimer. Requires pyridoxal 5'-phosphate as cofactor.

The enzyme catalyses 6-carboxyhexanoyl-[ACP] + L-alanine + H(+) = (8S)-8-amino-7-oxononanoate + holo-[ACP] + CO2. Its pathway is cofactor biosynthesis; biotin biosynthesis. Its function is as follows. Catalyzes the decarboxylative condensation of pimeloyl-[acyl-carrier protein] and L-alanine to produce 8-amino-7-oxononanoate (AON), [acyl-carrier protein], and carbon dioxide. The sequence is that of Putative 8-amino-7-oxononanoate synthase (bioF) from Desulforudis audaxviator (strain MP104C).